We begin with the raw amino-acid sequence, 1128 residues long: MTDNLTTTHGGSTTLELLAQYNDHRSKKDKSIEHIEKGTCSGKERNPSYDEIFTENIKLKLQVQEYETEIESLEKVIDMLQKNREASLEVVLEQVQNDSRDSYVNDQSFVLPPRSAERKAHIKSLNLPIPTLSPPLQQGSDVALETSVTPTVPQIGVTSNTSISRKHLQNMILNDEIEANSSFSSPKIINRSVSSPTKIHSEQLASPAASVTYTTSRITIKSPNKGSKSPLQERLRSPQNPNRMTAVINNHLHSPLKASTSNNLDELTESKSQQLTNDAIQKNDRVYSSITSSAYTTGTPTSAAKSPSSLLEVKEGENKALGFSPASKEKLDDFTQLLDSSFGEEDLVNTDSKDPLSIKSTINESLPPPPAPPTFFSPTSSGNIKNSTPLSSHLASPVILNKKDDNFGAQSAKNLKKPVLTSSLPNLSTKLSTTSQNASLPPNPPVESSSKQKQLGETASIHSTNTLNTFSSTPQGSLKTLRRPHASSVSTVKSVAQSLKSDIPLFVQPEDFGTIQIEVLSTLYRDNEDDLSILIAIIDRKSGKEMFKFSKSIHKVRELDVYMKSHVPDLPLPTLPDRQLFQTLSPTKVDTRKNILNQYYTSIFSVPEFPKNVGLKIAQFISTDTVMTPPMMDDNVKDGSLLLRRPKTLTGNSTWRVRYGILRDDVLQLFDKNQLTETIKLRQSSIELIPNLPEDRFGTRNGFLITEHKKSGLSTSTKYYICTETSKERELWLSAFSDYIDPSQSLSLSSSRNANDTDSASHLSAGTHHSKFGNATISATDTPSYVTDLTQEYNNNNNISNSSNNIANSDGIDSNPSSHSNFLASSSGNAEEEKDSRRAKMRSLFPFKKLTGPASAMNHIGITISNDSDSPTSPDSIIKSPSKKLMEVSSSSNSSTGPHVSTAIFGSSLETCLRLSSHKYQNVYDLPSVVYRCLEYLYKNRGIQEEGIFRLSGSSTVIKTLQERFDKEYDVDLCRYNESIEAKDDEASPSLYIGVNTVSGLLKLYLRKLPHLLFGDEQFLSFKRVVDENHNNPVQISLGFKELIESGLVPHANLSLMYALFELLVRINENSKFNKMNLRNLCIVFSPTLNIPISMLQPFITDFACIFQGGEPVKEEEREKVDIHIPQV.

The segment at 194-241 (SSPTKIHSEQLASPAASVTYTTSRITIKSPNKGSKSPLQERLRSPQNP) is disordered. Polar residues predominate over residues 209 to 230 (ASVTYTTSRITIKSPNKGSKSP). Residue S254 is modified to Phosphoserine. Disordered regions lie at residues 345-391 (EDLV…TPLS) and 418-486 (PVLT…RPHA). The span at 366–375 (LPPPPAPPTF) shows a compositional bias: pro residues. Polar residues-rich tracts occupy residues 382–391 (GNIKNSTPLS) and 420–478 (LTSS…QGSL). The PH domain maps to 634 to 741 (DNVKDGSLLL…WLSAFSDYID (108 aa)). Disordered regions lie at residues 746–777 (LSLSSSRNANDTDSASHLSAGTHHSKFGNATI) and 796–838 (NNNI…DSRR). A compositionally biased stretch (polar residues) spans 752 to 764 (RNANDTDSASHLS). Residues 796-815 (NNNISNSSNNIANSDGIDSN) are compositionally biased toward low complexity. A compositionally biased stretch (polar residues) spans 816-829 (PSSHSNFLASSSGN). The Rho-GAP domain occupies 913–1128 (LRLSSHKYQN…EKVDIHIPQV (216 aa)).

The protein localises to the cytoplasm. Its function is as follows. GTPase-activating protein (GAP) for CDC42 and less efficiently for RHO1. Negative regulator of the pheromone-response pathway through the STE20 protein kinase. The protein is GTPase-activating protein BEM3 (BEM3) of Saccharomyces cerevisiae (strain ATCC 204508 / S288c) (Baker's yeast).